The following is a 495-amino-acid chain: ATP-NADH kinase YEF1 (495 aa).

Residues 442–480 (KYRLDSSKNGNDTISNPLESSCISSDAQDEERKSVTETE) form a disordered region. Residues 448–467 (SKNGNDTISNPLESSCISSD) are compositionally biased toward polar residues.

It belongs to the NAD kinase family. In terms of assembly, homooctamer. Mg(2+) serves as cofactor. Mn(2+) is required as a cofactor. Requires Co(2+) as cofactor. It depends on Ca(2+) as a cofactor.

It carries out the reaction NADH + ATP = ADP + NADPH + H(+). ATP-NADH kinase with a low phosphorylation activity of both NADH and NAD(+) to produce NADP and NADPH by using ATP. UTR1 is responsible for essentially all of the NAD/NADH kinase activity resident in the cytoplasm, whereas POS5 is responsible for all mitochondrial NAD/NADH kinase activity and consequent mitochondrial genome maintenance. YEF1 can substitute for UTR1 when overexpressed. The protein is ATP-NADH kinase YEF1 (YEF1) of Saccharomyces cerevisiae (strain ATCC 204508 / S288c) (Baker's yeast).